We begin with the raw amino-acid sequence, 173 residues long: Ribosome maturation factor RimM (173 aa).

The PRC barrel domain maps to 98-170 (VGDMTWDSFI…SLTVSLPEGL (73 aa)).

This sequence belongs to the RimM family. As to quaternary structure, binds ribosomal protein uS19.

The protein localises to the cytoplasm. Functionally, an accessory protein needed during the final step in the assembly of 30S ribosomal subunit, possibly for assembly of the head region. Essential for efficient processing of 16S rRNA. May be needed both before and after RbfA during the maturation of 16S rRNA. It has affinity for free ribosomal 30S subunits but not for 70S ribosomes. The chain is Ribosome maturation factor RimM from Parabacteroides distasonis (strain ATCC 8503 / DSM 20701 / CIP 104284 / JCM 5825 / NCTC 11152).